The chain runs to 282 residues: Pantothenate synthetase (282 aa).

ATP is bound at residue 29–36 (MGFLHEGH). Histidine 36 (proton donor) is an active-site residue. A (R)-pantoate-binding site is contributed by glutamine 60. Glutamine 60 contacts beta-alanine. 146–149 (GEKD) serves as a coordination point for ATP. Glutamine 152 contributes to the (R)-pantoate binding site. Residues isoleucine 175 and 183-186 (KSSR) each bind ATP.

The protein belongs to the pantothenate synthetase family. In terms of assembly, homodimer.

Its subcellular location is the cytoplasm. The catalysed reaction is (R)-pantoate + beta-alanine + ATP = (R)-pantothenate + AMP + diphosphate + H(+). It participates in cofactor biosynthesis; (R)-pantothenate biosynthesis; (R)-pantothenate from (R)-pantoate and beta-alanine: step 1/1. Functionally, catalyzes the condensation of pantoate with beta-alanine in an ATP-dependent reaction via a pantoyl-adenylate intermediate. The protein is Pantothenate synthetase of Clostridioides difficile (strain 630) (Peptoclostridium difficile).